The chain runs to 185 residues: ATP-dependent protease subunit HslV (185 aa).

T12 is a catalytic residue. Residues A168, C171, and T174 each contribute to the Na(+) site.

Belongs to the peptidase T1B family. HslV subfamily. As to quaternary structure, a double ring-shaped homohexamer of HslV is capped on each side by a ring-shaped HslU homohexamer. The assembly of the HslU/HslV complex is dependent on binding of ATP.

It is found in the cytoplasm. The catalysed reaction is ATP-dependent cleavage of peptide bonds with broad specificity.. Allosterically activated by HslU binding. Functionally, protease subunit of a proteasome-like degradation complex believed to be a general protein degrading machinery. This is ATP-dependent protease subunit HslV from Cereibacter sphaeroides (strain ATCC 17023 / DSM 158 / JCM 6121 / CCUG 31486 / LMG 2827 / NBRC 12203 / NCIMB 8253 / ATH 2.4.1.) (Rhodobacter sphaeroides).